The primary structure comprises 465 residues: Light-independent protochlorophyllide reductase subunit N (465 aa).

[4Fe-4S] cluster contacts are provided by C23, C48, and C108.

This sequence belongs to the BchN/ChlN family. Protochlorophyllide reductase is composed of three subunits; ChlL, ChlN and ChlB. Forms a heterotetramer of two ChlB and two ChlN subunits. Requires [4Fe-4S] cluster as cofactor.

It carries out the reaction chlorophyllide a + oxidized 2[4Fe-4S]-[ferredoxin] + 2 ADP + 2 phosphate = protochlorophyllide a + reduced 2[4Fe-4S]-[ferredoxin] + 2 ATP + 2 H2O. It functions in the pathway porphyrin-containing compound metabolism; chlorophyll biosynthesis (light-independent). Component of the dark-operative protochlorophyllide reductase (DPOR) that uses Mg-ATP and reduced ferredoxin to reduce ring D of protochlorophyllide (Pchlide) to form chlorophyllide a (Chlide). This reaction is light-independent. The NB-protein (ChlN-ChlB) is the catalytic component of the complex. The chain is Light-independent protochlorophyllide reductase subunit N from Trichodesmium erythraeum (strain IMS101).